Here is a 494-residue protein sequence, read N- to C-terminus: GTPase Der (494 aa).

2 consecutive EngA-type G domains span residues 2-164 and 235-407; these read KKIA…PEED and IKIS…KNYS. GTP-binding positions include 8-15, 55-59, 116-119, 241-248, 288-292, and 352-355; these read GRPNVGKS, DTGGL, NKID, GRTNVGKS, DTAGL, and NKWD. One can recognise a KH-like domain in the interval 408–492; it reads QHIKTSELNV…PVLFKAKKRG (85 aa).

It belongs to the TRAFAC class TrmE-Era-EngA-EngB-Septin-like GTPase superfamily. EngA (Der) GTPase family. As to quaternary structure, associates with the 50S ribosomal subunit.

Functionally, GTPase that plays an essential role in the late steps of ribosome biogenesis. The polypeptide is GTPase Der (Sulfurimonas denitrificans (strain ATCC 33889 / DSM 1251) (Thiomicrospira denitrificans (strain ATCC 33889 / DSM 1251))).